Reading from the N-terminus, the 163-residue chain is Cyclic pyranopterin monophosphate synthase (163 aa).

Substrate-binding positions include 79-81 (LCH) and 118-119 (ME). D133 is an active-site residue.

This sequence belongs to the MoaC family. In terms of assembly, homohexamer; trimer of dimers.

The catalysed reaction is (8S)-3',8-cyclo-7,8-dihydroguanosine 5'-triphosphate = cyclic pyranopterin phosphate + diphosphate. The protein operates within cofactor biosynthesis; molybdopterin biosynthesis. Catalyzes the conversion of (8S)-3',8-cyclo-7,8-dihydroguanosine 5'-triphosphate to cyclic pyranopterin monophosphate (cPMP). This is Cyclic pyranopterin monophosphate synthase from Nocardioides sp. (strain ATCC BAA-499 / JS614).